The following is a 904-amino-acid chain: Translation initiation factor IF-2 (904 aa).

Disordered stretches follow at residues 102–122 (TYVK…PDEE), 134–252 (RQRN…MVAG), and 267–316 (HLSA…ERPT). The span at 134–177 (RQRNLEEQQRLAESDRVRDEAIQRKREEEQAAKDRAEAERKAAE) shows a compositional bias: basic and acidic residues. Residues 178 to 230 (EAAAAASAPAPVADAPKPSAAAPAARLPSSPSSAPRAARPAGASPASRPAAPA) show a composition bias toward low complexity. A tr-type G domain is found at 403 to 572 (SRPPVVTIMG…SLQAEVLELK (170 aa)). The interval 412–419 (GHVDHGKT) is G1. 412–419 (GHVDHGKT) lines the GTP pocket. Residues 437–441 (GITQH) are G2. Positions 458 to 461 (DTPG) are G3. GTP contacts are provided by residues 458–462 (DTPGH) and 512–515 (NKID). The interval 512-515 (NKID) is G4. The interval 548 to 550 (SAK) is G5.

The protein belongs to the TRAFAC class translation factor GTPase superfamily. Classic translation factor GTPase family. IF-2 subfamily.

It is found in the cytoplasm. Functionally, one of the essential components for the initiation of protein synthesis. Protects formylmethionyl-tRNA from spontaneous hydrolysis and promotes its binding to the 30S ribosomal subunits. Also involved in the hydrolysis of GTP during the formation of the 70S ribosomal complex. In Xanthomonas axonopodis pv. citri (strain 306), this protein is Translation initiation factor IF-2.